The primary structure comprises 368 residues: 1-deoxy-D-xylulose 5-phosphate reductoisomerase (368 aa).

NADPH-binding residues include threonine 9, glycine 10, serine 11, isoleucine 12, asparagine 35, and asparagine 106. Lysine 107 is a binding site for 1-deoxy-D-xylulose 5-phosphate. Glutamate 108 is an NADPH binding site. Aspartate 132 contacts Mn(2+). The 1-deoxy-D-xylulose 5-phosphate site is built by serine 133, glutamate 134, serine 158, and histidine 181. Glutamate 134 lines the Mn(2+) pocket. Glycine 187 is a binding site for NADPH. Serine 194, asparagine 199, lysine 200, and glutamate 203 together coordinate 1-deoxy-D-xylulose 5-phosphate. Position 203 (glutamate 203) interacts with Mn(2+).

Belongs to the DXR family. Mg(2+) serves as cofactor. The cofactor is Mn(2+).

The catalysed reaction is 2-C-methyl-D-erythritol 4-phosphate + NADP(+) = 1-deoxy-D-xylulose 5-phosphate + NADPH + H(+). The protein operates within isoprenoid biosynthesis; isopentenyl diphosphate biosynthesis via DXP pathway; isopentenyl diphosphate from 1-deoxy-D-xylulose 5-phosphate: step 1/6. Its function is as follows. Catalyzes the NADPH-dependent rearrangement and reduction of 1-deoxy-D-xylulose-5-phosphate (DXP) to 2-C-methyl-D-erythritol 4-phosphate (MEP). This Mycoplasmoides gallisepticum (strain R(low / passage 15 / clone 2)) (Mycoplasma gallisepticum) protein is 1-deoxy-D-xylulose 5-phosphate reductoisomerase.